Reading from the N-terminus, the 219-residue chain is Ribose-5-phosphate isomerase A (219 aa).

Substrate-binding positions include 28–31, 81–84, and 94–97; these read TGST, DGAD, and KGGG. Residue E103 is the Proton acceptor of the active site. Substrate is bound at residue K121.

Belongs to the ribose 5-phosphate isomerase family. As to quaternary structure, homodimer.

It catalyses the reaction aldehydo-D-ribose 5-phosphate = D-ribulose 5-phosphate. Its pathway is carbohydrate degradation; pentose phosphate pathway; D-ribose 5-phosphate from D-ribulose 5-phosphate (non-oxidative stage): step 1/1. In terms of biological role, catalyzes the reversible conversion of ribose-5-phosphate to ribulose 5-phosphate. The polypeptide is Ribose-5-phosphate isomerase A (Edwardsiella ictaluri (strain 93-146)).